A 1653-amino-acid chain; its full sequence is Clathrin heavy chain (1653 aa).

The interval 1–483 is globular terminal domain; the sequence is MSDLPIEFTE…FDTTLALACY (483 aa). 7 WD40-like repeat regions span residues 23–66, 67–107, 108–152, 153–198, 199–263, 264–307, and 308–336; these read FLDF…KNMG, GDSA…LDEP, VIFW…ANLN, NTQI…QAID, GHVA…PDAT, NDFP…ITAE, and SVFT…VEIS. The binding site for the uncoating ATPase, involved in lattice disassembly stretch occupies residues 453–469; that stretch reads EKWLKEDKLECSEELGD. The flexible linker stretch occupies residues 484-527; sequence LRAGAHAKVISCLAELQQFEKIIPYCQKVGYQPNFLVLISSLIR. The interval 528-1653 is heavy chain arm; it reads SSPDRASEFA…SAMNVQPTGF (1126 aa). CHCR repeat units lie at residues 543–689, 692–834, 839–978, 985–1130, 1134–1275, 1280–1426, and 1429–1572; these read NPET…QTVV, ATKF…DEAF, LQSV…QLID, IPEL…IPDA, YIKA…FKLA, LNLI…SLLV, and LTSL…REGF. A Glycyl lysine isopeptide (Lys-Gly) (interchain with G-Cter in ubiquitin) cross-link involves residue lysine 1107. The involved in binding clathrin light chain stretch occupies residues 1219–1528; sequence AARLCYSAVS…LLYRRNKKWA (310 aa).

It belongs to the clathrin heavy chain family. Clathrin triskelions, composed of 3 heavy chains and 3 light chains, are the basic subunits of the clathrin coat. Interacts with the auxilin-like clathrin uncoating factor SWA2. Interacts with INP53.

The protein localises to the cytoplasmic vesicle membrane. The protein resides in the membrane. It is found in the coated pit. Clathrin is the major protein of the polyhedral coat of coated pits and vesicles. In yeast, it is involved in the retention of proteins in an intracellular membrane compartment, presumably the trans-Golgi. This is Clathrin heavy chain (CHC1) from Saccharomyces cerevisiae (strain ATCC 204508 / S288c) (Baker's yeast).